The following is a 497-amino-acid chain: mRNA cleavage and polyadenylation factor CLP1 (497 aa).

Positions 1 to 20 are disordered; the sequence is MSIPGLGQIAPQQPTTSTTR. Residues Glu-29 and 168–173 contribute to the ATP site; that span reads DSGKTT.

This sequence belongs to the Clp1 family. Clp1 subfamily. Component of a pre-mRNA cleavage factor complex. Interacts directly with PCF11.

The protein localises to the nucleus. Required for endonucleolytic cleavage during polyadenylation-dependent pre-mRNA 3'-end formation. The polypeptide is mRNA cleavage and polyadenylation factor CLP1 (Chaetomium globosum (strain ATCC 6205 / CBS 148.51 / DSM 1962 / NBRC 6347 / NRRL 1970) (Soil fungus)).